Consider the following 294-residue polypeptide: Protein C3orf33 homolog (294 aa).

At A2 the chain carries N-acetylalanine. A helical transmembrane segment spans residues 36-53 (LVQNISTGMAIAGIMLLI). Positions 244 to 271 (KPAGADLGSTKDSYHDSRRRASGKGKDS) are disordered.

The protein resides in the membrane. In terms of biological role, may play a role in transcription regulation. This is Protein C3orf33 homolog from Mus musculus (Mouse).